Consider the following 380-residue polypeptide: Homoserine O-acetyltransferase (380 aa).

An AB hydrolase-1 domain is found at N59–E363. The Nucleophile role is filled by S164. Residue R234 participates in substrate binding. Catalysis depends on residues D327 and H357. D358 lines the substrate pocket.

Belongs to the AB hydrolase superfamily. MetX family. As to quaternary structure, homodimer.

It is found in the cytoplasm. It carries out the reaction L-homoserine + acetyl-CoA = O-acetyl-L-homoserine + CoA. It functions in the pathway amino-acid biosynthesis; L-methionine biosynthesis via de novo pathway; O-acetyl-L-homoserine from L-homoserine: step 1/1. Its function is as follows. Transfers an acetyl group from acetyl-CoA to L-homoserine, forming acetyl-L-homoserine. This is Homoserine O-acetyltransferase from Mycolicibacterium smegmatis (strain ATCC 700084 / mc(2)155) (Mycobacterium smegmatis).